The primary structure comprises 157 residues: Transcriptional repressor NrdR (157 aa).

Residues 1-26 (MRCPKCGGSKSSVIDSRQAEDGNTIR) form a disordered region. A zinc finger lies at 3-34 (CPKCGGSKSSVIDSRQAEDGNTIRRRRECEDC). Residues 17-26 (RQAEDGNTIR) are compositionally biased toward basic and acidic residues. An ATP-cone domain is found at 49–139 (LVVVKKDGTR…VYRSFKDVGE (91 aa)).

Belongs to the NrdR family. Requires Zn(2+) as cofactor.

In terms of biological role, negatively regulates transcription of bacterial ribonucleotide reductase nrd genes and operons by binding to NrdR-boxes. This Streptococcus gordonii (strain Challis / ATCC 35105 / BCRC 15272 / CH1 / DL1 / V288) protein is Transcriptional repressor NrdR.